The sequence spans 266 residues: N-acetylneuraminate lyase B (266 aa).

The aceneuramate site is built by threonine 51 and threonine 52. Tyrosine 143 serves as the catalytic Proton donor. Lysine 173 (schiff-base intermediate with substrate) is an active-site residue. Residues serine 175, glycine 197, aspartate 199, glutamate 200, and serine 216 each coordinate aceneuramate.

Belongs to the DapA family. NanA subfamily. In terms of assembly, homotetramer.

Its subcellular location is the cytoplasm. The catalysed reaction is aceneuramate = aldehydo-N-acetyl-D-mannosamine + pyruvate. It functions in the pathway amino-sugar metabolism; N-acetylneuraminate degradation. In terms of biological role, catalyzes the cleavage of N-acetylneuraminic acid (sialic acid) to form pyruvate and N-acetylmannosamine via a Schiff base intermediate. It prevents sialic acids from being recycled and returning to the cell surface. Involved in the N-glycolylneuraminic acid (Neu5Gc) degradation pathway. The polypeptide is N-acetylneuraminate lyase B (npl-b) (Xenopus laevis (African clawed frog)).